A 316-amino-acid chain; its full sequence is CD276 antigen (316 aa).

Positions methionine 1–alanine 28 are cleaved as a signal peptide. One can recognise an Ig-like V-type domain in the interval valine 29–alanine 139. The Extracellular segment spans residues valine 29–alanine 248. 3 N-linked (GlcNAc...) asparagine glycosylation sites follow: asparagine 104, asparagine 189, and asparagine 215. One can recognise an Ig-like C2-type domain in the interval proline 145–threonine 238. Cysteine 165 and cysteine 220 form a disulfide bridge. The chain crosses the membrane as a helical span at residues leucine 249 to valine 269. The Cytoplasmic segment spans residues cysteine 270–alanine 316. Positions glutamate 281 to glycine 292 are enriched in acidic residues. The disordered stretch occupies residues glutamate 281–alanine 316.

It belongs to the immunoglobulin superfamily. BTN/MOG family. Interacts with TREML2 and this interaction enhances T-cell activation.

The protein localises to the membrane. Its function is as follows. Modulates T-cell-mediated immune responses and the development of acute and chronic transplant rejection. May play a positive regulatory role in bone formation and has a dual role in the bone-immune interface. Induces antitumor immunity as it activates both acquired and innate immunity leading to natural killer cell and CD8 T-cell dependent killing of tumor cells. In Rattus norvegicus (Rat), this protein is CD276 antigen (Cd276).